The sequence spans 152 residues: Perlwapin (152 aa).

The N-terminal stretch at 1–18 (LILCVVVCTAAVLGTAAG) is a signal peptide. One can recognise a WAP 1 domain in the interval 19–61 (YESQLPGCPPGAYPAICARYCYSDRDCASGYYCCNTGCLNICV). Disulfide bonds link C26-C52, C35-C56, C39-C51, C45-C60, C69-C95, C77-C100, C82-C94, C88-C103, C112-C139, C122-C142, C126-C138, and C132-C146. The WAP 2; atypical domain maps to 62-107 (PKPKPGLCPSITQSPCRGNVCNNDQDCPGNRKCCGKPGCKRCYRPK). The WAP 3 domain maps to 108–150 (KPGSCPARKYEAGPCVVYCDGDFDCPGDKKCCGGCPRLCEKPC).

As to expression, component of the acid-soluble and acid-insoluble organic matrix of prismatic shell layers (at protein level).

The protein resides in the secreted. In terms of biological role, inhibits growth of calcium carbonate crystals. May inhibit growth of certain crystallographic planes in the mineral phase of nacre in the shell. In Haliotis asinina (Donkey's ear abalone), this protein is Perlwapin.